Reading from the N-terminus, the 807-residue chain is Dual specificity protein kinase YAK1 (807 aa).

Residues 1-19 (MNSSNNNDSSSSNSNMNNS) are compositionally biased toward low complexity. The interval 1-84 (MNSSNNNDSS…QQQQQQQQNS (84 aa)) is disordered. The segment covering 20–31 (LSPTLVTHSDAS) has biased composition (polar residues). Ser38 bears the Phosphoserine mark. Residues 55–84 (NQGSQRSPQQQHQNHHQQQQQQQQQQQQNS) show a composition bias toward low complexity. 3 positions are modified to phosphoserine: Ser115, Ser118, and Ser127. Residues 124 to 180 (RRKSSLVVPPARAPAPNPFQYDSYPAYTSSNTSLAGNSSGQYPSGYQQQQQQVYQQG) form a disordered region. Residues 149–160 (AYTSSNTSLAGN) are compositionally biased toward polar residues. The span at 161-180 (SSGQYPSGYQQQQQQVYQQG) shows a compositional bias: low complexity. Phosphoserine is present on Ser206. Residues 214 to 224 (SNFSSLNSNTN) are compositionally biased toward low complexity. Residues 214-254 (SNFSSLNSNTNQGTNSIPVMSPYRRLSAYPPSTSPPLQPPF) are disordered. Residues Ser240, Ser245, and Ser247 each carry the phosphoserine modification. Position 288 is a phosphothreonine (Thr288). Position 295 is a phosphoserine (Ser295). The Protein kinase domain occupies 369-704 (YLVLDILGQG…PQQAMLHPFI (336 aa)). Residues 375 to 383 (LGQGTFGQV) and Lys398 contribute to the ATP site. Asp496 functions as the Proton acceptor in the catalytic mechanism. Position 530 is a phosphotyrosine (Tyr530). Residues 714–758 (FPPGSSLPGPSEKHDDAKGQQSEYGSANDSSNNAGHNYVYNPSSA) are disordered. Polar residues predominate over residues 732–758 (GQQSEYGSANDSSNNAGHNYVYNPSSA).

This sequence belongs to the protein kinase superfamily. CMGC Ser/Thr protein kinase family. MNB/DYRK subfamily. Phosphorylated; highly.

It is found in the cytoplasm. The protein localises to the nucleus. It catalyses the reaction L-seryl-[protein] + ATP = O-phospho-L-seryl-[protein] + ADP + H(+). It carries out the reaction L-threonyl-[protein] + ATP = O-phospho-L-threonyl-[protein] + ADP + H(+). The catalysed reaction is L-tyrosyl-[protein] + ATP = O-phospho-L-tyrosyl-[protein] + ADP + H(+). Its function is as follows. Negative regulator of the cell cycle acting downstream of the cAMP-dependent protein kinase. Part of a glucose-sensing system involved in growth control in response to glucose availability. Phosphorylates POP2. This is Dual specificity protein kinase YAK1 (YAK1) from Saccharomyces cerevisiae (strain ATCC 204508 / S288c) (Baker's yeast).